Here is a 355-residue protein sequence, read N- to C-terminus: Protein RecA (355 aa).

67-74 (GPESSGKT) contributes to the ATP binding site. Residues 335 to 355 (NSLVSDVESEDEGASESNEEF) are disordered. The span at 341–355 (VESEDEGASESNEEF) shows a compositional bias: acidic residues.

Belongs to the RecA family.

It localises to the cytoplasm. Can catalyze the hydrolysis of ATP in the presence of single-stranded DNA, the ATP-dependent uptake of single-stranded DNA by duplex DNA, and the ATP-dependent hybridization of homologous single-stranded DNAs. It interacts with LexA causing its activation and leading to its autocatalytic cleavage. The chain is Protein RecA from Sodalis glossinidius.